Here is a 224-residue protein sequence, read N- to C-terminus: Orotate phosphoribosyltransferase (224 aa).

Residues Lys26, 73 to 74, Arg100, Lys101, Lys104, His106, and 127 to 135 contribute to the 5-phospho-alpha-D-ribose 1-diphosphate site; these read YK and EDVTTSGKS. Residues Thr131 and Arg160 each contribute to the orotate site.

The protein belongs to the purine/pyrimidine phosphoribosyltransferase family. PyrE subfamily. As to quaternary structure, homodimer. Mg(2+) serves as cofactor.

The catalysed reaction is orotidine 5'-phosphate + diphosphate = orotate + 5-phospho-alpha-D-ribose 1-diphosphate. It participates in pyrimidine metabolism; UMP biosynthesis via de novo pathway; UMP from orotate: step 1/2. Functionally, catalyzes the transfer of a ribosyl phosphate group from 5-phosphoribose 1-diphosphate to orotate, leading to the formation of orotidine monophosphate (OMP). The chain is Orotate phosphoribosyltransferase from Clostridium botulinum (strain Eklund 17B / Type B).